We begin with the raw amino-acid sequence, 120 residues long: Holo-[acyl-carrier-protein] synthase (120 aa).

Mg(2+) contacts are provided by Asp8 and Glu58.

It belongs to the P-Pant transferase superfamily. AcpS family. Requires Mg(2+) as cofactor.

It localises to the cytoplasm. The catalysed reaction is apo-[ACP] + CoA = holo-[ACP] + adenosine 3',5'-bisphosphate + H(+). Transfers the 4'-phosphopantetheine moiety from coenzyme A to a Ser of acyl-carrier-protein. The polypeptide is Holo-[acyl-carrier-protein] synthase (Limosilactobacillus reuteri (strain DSM 20016) (Lactobacillus reuteri)).